The primary structure comprises 340 residues: Guanine nucleotide-binding protein G(I)/G(S)/G(T) subunit beta-1 (340 aa).

WD repeat units follow at residues 53-83 (GHLA…IIWD), 95-125 (LRSS…PIYN), 141-170 (GHTG…ALWD), 182-212 (GHTG…KLWD), 224-254 (GHES…RLFD), 268-298 (NIIC…NVWD), and 310-340 (GHDN…KIWN).

This sequence belongs to the WD repeat G protein beta family. In terms of assembly, g proteins are composed of 3 units, alpha, beta and gamma.

In terms of biological role, guanine nucleotide-binding proteins (G proteins) are involved as a modulator or transducer in various transmembrane signaling systems. The beta and gamma chains are required for the GTPase activity, for replacement of GDP by GTP, and for G protein-effector interaction. This chain is Guanine nucleotide-binding protein G(I)/G(S)/G(T) subunit beta-1 (gnb1), found in Xenopus laevis (African clawed frog).